Reading from the N-terminus, the 264-residue chain is Catechol O-methyltransferase B (264 aa).

The signal sequence occupies residues 1-29 (MLGVLLCWCLGASVLLYVLYSWLIPAAVQ). N-linked (GlcNAc...) asparagine glycosylation occurs at N31. Residues V92, S122, E140, and D191 each contribute to the S-adenosyl-L-methionine site. Position 191 (D191) interacts with Mg(2+). Position 194 (K194) interacts with substrate. 2 residues coordinate Mg(2+): D219 and N220. Substrate-binding residues include N220 and E249.

It belongs to the class I-like SAM-binding methyltransferase superfamily. Cation-dependent O-methyltransferase family. Mg(2+) serves as cofactor. In terms of tissue distribution, strongly expressed in eye, diencephalon, spinal cord, hindbrain, liver, kidney and telencephalon. Also detected at very low levels in muscle, spleen, anterior gut and heart. In eye, expressed strongly in retina. In brain, expressed in the central part of the telencephalon, the periventricular gray zone of the optic tectum, the periglomerular nucleus, the olfactory bulb, and the region adjacent to the diencephalic ventricle in the hypothalamus. Expressed in gill, with strongest expression in gill filaments nearest the gill arch, and in esophageal epithelium.

It is found in the secreted. It carries out the reaction a catechol + S-adenosyl-L-methionine = a guaiacol + S-adenosyl-L-homocysteine + H(+). In terms of biological role, catalyzes the O-methylation, and thereby the inactivation, of catecholamine neurotransmitters and catechol hormones. The sequence is that of Catechol O-methyltransferase B from Danio rerio (Zebrafish).